Here is a 315-residue protein sequence, read N- to C-terminus: uncharacterized protein (315 aa).

The protein belongs to the asfivirus C315R family.

This is an uncharacterized protein from Ornithodoros (relapsing fever ticks).